Consider the following 694-residue polypeptide: Pentatricopeptide repeat-containing protein At3g12770 (694 aa).

13 PPR repeats span residues 52 to 82, 83 to 117, 118 to 152, 153 to 183, 186 to 220, 221 to 255, 256 to 286, 287 to 321, 322 to 356, 357 to 387, 388 to 422, 423 to 457, and 458 to 488; these read SGFLITKLIHASSSFGDITFARQVFDDLPRP, QIFPWNAIIRGYSRNNHFQDALLMYSNMQLARVSP, DSFTFPHLLKACSGLSHLQMGRFVHAQVFRLGFDA, DVFVQNGLIALYAKCRRLGSARTVFEGLPLP, TIVSWTAIVSAYAQNGEPMEALEIFSQMRKMDVKP, DWVALVSVLNAFTCLQDLKQGRSIHASVVKMGLEI, EPDLLISLNTMYAKCGQVATAKILFDKMKSP, NLILWNAMISGYAKNGYAREAIDMFHEMINKDVRP, DTISITSAISACAQVGSLEQARSMYEYVGRSDYRD, DVFISSALIDMFAKCGSVEGARLVFDRTLDR, DVVVWSAMIVGYGLHGRAREAISLYRAMERGGVHP, NDVTFLGLLMACNHSGMVREGWWFFNRMADHKINP, and QQQHYACVIDLLGRAGHLDQAYEVIKCMPVQ. The interval 493-568 is type E motif; the sequence is VWGALLSACK…DVGCSWVEVR (76 aa). The interval 569 to 599 is type E(+) motif; sequence GRLEAFRVGDKSHPRYEEIERQVEWIESRLK. Residues 600–694 form a type DYW motif region; that stretch reads EGGFVANKDA…DGVCSCGDYW (95 aa).

Belongs to the PPR family. PCMP-H subfamily.

In Arabidopsis thaliana (Mouse-ear cress), this protein is Pentatricopeptide repeat-containing protein At3g12770 (PCMP-H43).